Reading from the N-terminus, the 92-residue chain is Small ribosomal subunit protein uS19 (92 aa).

Belongs to the universal ribosomal protein uS19 family.

In terms of biological role, protein S19 forms a complex with S13 that binds strongly to the 16S ribosomal RNA. The sequence is that of Small ribosomal subunit protein uS19 from Brucella ovis (strain ATCC 25840 / 63/290 / NCTC 10512).